Consider the following 3365-residue polypeptide: Probable serine/threonine-protein kinase roco9 (3365 aa).

Disordered regions lie at residues 1–177 (MTSI…KSSK), 397–497 (ESTE…QPPQ), 944–985 (PIKK…GFLS), 1044–1098 (IHQQ…NNKI), and 1261–1301 (QNNL…ISKG). A compositionally biased stretch (basic and acidic residues) spans 8 to 27 (FDKKSKRSNEDTGEKEETKK). Composition is skewed to low complexity over residues 51-84 (LQQL…SLNT), 100-116 (STNS…STRS), 137-169 (SQTS…TVKT), and 397-415 (ESTE…TLEP). The Rho-GAP domain occupies 243 to 437 (TPLYSLIKRQ…RLPQQSSDDN (195 aa)). A compositionally biased stretch (polar residues) spans 421-434 (PLSTSTQRLPQQSS). Low complexity-rich tracts occupy residues 435-445 (DDNSNNDNNNK), 457-489 (NNDN…QPKQ), 959-974 (SSPL…IPSK), 1044-1096 (IHQQ…NNNN), and 1262-1301 (NNLN…ISKG). The Myotubularin phosphatase domain occupies 804-1484 (IWDIYSPLIE…DQIILWSSFF (681 aa)). 16 LRR repeats span residues 1510 to 1526 (SQKL…LSYF), 1527 to 1549 (STLT…IILL), 1550 to 1572 (SNLT…LLKL), 1576 to 1599 (KLKL…IYTL), 1600 to 1622 (STLT…ISKM), 1624 to 1645 (QLKC…LSLC), 1646 to 1668 (VGLE…FFKL), 1670 to 1691 (SLRM…KLDD), 1697 to 1720 (MNEI…MFEM), 1722 to 1743 (SLIH…LLDN), 1744 to 1770 (LVNL…LFKL), 1772 to 1789 (VLDL…HAML), 1790 to 1812 (PSLK…DFNL), 1814 to 1835 (LLSE…IGTK), 1837 to 1861 (LSLT…ALLK), and 1863 to 1887 (LKSL…DAIL). Residues 1932 to 1947 (SKEREKEKEKEKEKEK) are compositionally biased toward basic and acidic residues. Disordered regions lie at residues 1932–1963 (SKER…DKDK), 2190–2389 (NNNN…NNGS), 2507–2567 (APST…LQTP), and 2674–2704 (SNQQ…TSIN). Composition is skewed to low complexity over residues 2190–2205 (NNNN…NNNN), 2216–2389 (SINN…NNGS), 2522–2567 (NNTS…LQTP), and 2676–2688 (QQQQ…STQH). Positions 3008–3269 (ELDPNPIGEG…KKLEEIELIL (262 aa)) constitute a Protein kinase domain. ATP-binding positions include 3014-3022 (IGEGGTATV) and Lys3035. Asp3132 (proton acceptor) is an active-site residue. The span at 3311 to 3333 (QQQKQQQLQQQKQSPKQLQQQKP) shows a compositional bias: low complexity. The segment at 3311–3365 (QQQKQQQLQQQKQSPKQLQQQKPLPTPPKQLSNNDSTPTKPLDDSSDSSSEDSNN) is disordered. The segment covering 3354–3365 (DSSDSSSEDSNN) has biased composition (acidic residues).

It belongs to the protein kinase superfamily. TKL Ser/Thr protein kinase family. ROCO subfamily.

It catalyses the reaction L-seryl-[protein] + ATP = O-phospho-L-seryl-[protein] + ADP + H(+). The catalysed reaction is L-threonyl-[protein] + ATP = O-phospho-L-threonyl-[protein] + ADP + H(+). The sequence is that of Probable serine/threonine-protein kinase roco9 (roco9) from Dictyostelium discoideum (Social amoeba).